The sequence spans 24 residues: Protein YsdE (24 aa).

This Escherichia coli (strain K12) protein is Protein YsdE.